A 328-amino-acid chain; its full sequence is MIRPALRTDWTVEEARAIHALPFPELMHRAQTLHRAHFDPTAIETASLLSIKTGGCPEDCGYCSQSAHHDTGVKATKLMAEEEVLAAARRAKAAGAQRFCMGAAWRSPKDRDMDQLCDMVRGVADLGLETCMTLGMLSPGQVARLKAAGLDFYNHNIDTSPAYYAQIASTRTMEDRLETVEQVRRGGIKVCCGGILGMGEAEEDRIALLVTLATLPAHPDSVPVNLWNEIEGVPVQGRARAVDPFALVRIVALARILMPASVVRLSAGRTEMSDELQALCFLAGANSIFVGDQLLTTGNPAAWKDRDLLSRLGLHIAPARARPPVAAD.

The 220-residue stretch at 41 to 260 (TAIETASLLS…VALARILMPA (220 aa)) folds into the Radical SAM core domain. Residues Cys56, Cys60, and Cys63 each contribute to the [4Fe-4S] cluster site. [2Fe-2S] cluster-binding residues include Cys100, Cys131, Cys191, and Arg264.

It belongs to the radical SAM superfamily. Biotin synthase family. In terms of assembly, homodimer. [4Fe-4S] cluster is required as a cofactor. [2Fe-2S] cluster serves as cofactor.

The enzyme catalyses (4R,5S)-dethiobiotin + (sulfur carrier)-SH + 2 reduced [2Fe-2S]-[ferredoxin] + 2 S-adenosyl-L-methionine = (sulfur carrier)-H + biotin + 2 5'-deoxyadenosine + 2 L-methionine + 2 oxidized [2Fe-2S]-[ferredoxin]. Its pathway is cofactor biosynthesis; biotin biosynthesis; biotin from 7,8-diaminononanoate: step 2/2. Catalyzes the conversion of dethiobiotin (DTB) to biotin by the insertion of a sulfur atom into dethiobiotin via a radical-based mechanism. This is Biotin synthase from Cereibacter sphaeroides (strain ATCC 17029 / ATH 2.4.9) (Rhodobacter sphaeroides).